Here is a 2049-residue protein sequence, read N- to C-terminus: Non-reducing polyketide synthase hmp3 (2049 aa).

Positions 9–246 (LYFGDQTDSW…NELSIHALQH (238 aa)) are N-terminal acylcarrier protein transacylase (SAT) domain. The region spanning 365-793 (PGRIAIVGMA…GGNASLILED (429 aa)) is the Ketosynthase family 3 (KS3) domain. Active-site for beta-ketoacyl synthase activity residues include cysteine 538, histidine 673, and histidine 712. Residues 887–1146 (VFVFTGQGSH…VDFVGALGAL (260 aa)) are malonyl-CoA:ACP transacylase (MAT) domain. Catalysis depends on serine 978, which acts as the For acyl/malonyl transferase activity. The segment at 1265-1404 (QQIVEESSSP…AQTLQTSWNR (140 aa)) is N-terminal hotdog fold. The PKS/mFAS DH domain occupies 1265-1573 (QQIVEESSSP…FHEVSNNVLD (309 aa)). Residues 1269–1572 (EESSSPSLHV…SFHEVSNNVL (304 aa)) are product template (PT) domain. Positions 1425 to 1573 (GHRMLPSILY…FHEVSNNVLD (149 aa)) are C-terminal hotdog fold. One can recognise a Carrier domain in the interval 1626 to 1704 (SSESELFHTI…DLRNEFARSS (79 aa)). Residue serine 1663 is modified to O-(pantetheine 4'-phosphoryl)serine. Residues 1700–1747 (FARSSTSTPPSKTFSEFSIVDATPESTRSSSRAPSEKKEPAPASEKSE) are disordered. The segment covering 1703 to 1717 (SSTSTPPSKTFSEFS) has biased composition (low complexity). A compositionally biased stretch (polar residues) spans 1723–1732 (PESTRSSSRA). Over residues 1733–1747 (PSEKKEPAPASEKSE) the composition is skewed to basic and acidic residues. The interval 1761–1951 (SPLPSARITL…KRTAIIWAKK (191 aa)) is thioesterase (TE) domain.

The protein operates within secondary metabolite biosynthesis. Its function is as follows. Non-reducing polyketide synthase; part of the gene cluster that mediates the biosynthesis of hypothemycin, a resorcylic acid lactone (RAL) that irreversibly inhibits a subset of protein kinases with a conserved cysteine in the ATP binding site such as human ERK2. The first step is performed by both PKSs hmp3 and hmp8 and leads to the production of 7',8'-dehydrozearalenol (DHZ). The highly reducing PKS hpm8 synthesizes the reduced hexaketide (7S,11S,2E,8E)-7,11-dihydroxy-dodeca-2,8-dienoate, which is transferred downstream to the non-reducing PKS hpm3. Hpm3 then extends the reduced hexaketide to a nonaketide, after which regioselective cyclization and macrolactonization affords DHZ. The next step is the conversion of DHZ into aigialomycin C and is performed by the O-methyltransferase hmp5, the FAD-binding monooxygenase hmp7, and the cytochrome P450 monooxygenase hmp1. The wide substrate tolerance of the hmp5 and hmp7 implies that the reactions from DHZ to aigialomycin C can occur in any order. The steps from aigialomycin C to hypothemycin are less well established. The FAD-linked oxidoreductase hmp9 presumably catalyzes oxidation of the C-6' hydroxyl to a ketone. The timing of this oxidation is important, since the resulting enone functional group is a Michael acceptor that can react spontaneously with glutathione, an abundant metabolite in fungal cells. The glutathione S-transferase hmp2 catalyzes cis-trans isomerization of the 7',8' double bond with equilibrium favoring the trans isomer. The hpm6-encoded transporter might preferentially pump hypothemycin out of the cell relative to the trans isomer aigialomycin A. The cis-to-trans isomerization may be coupled with C-4' hydroxylation, since all known hypothemycin analogs containing the enone functional group also have hydroxyl groups at both C-4' and C-5'. This Hypomyces subiculosus (Nectria subiculosa) protein is Non-reducing polyketide synthase hmp3.